Here is a 558-residue protein sequence, read N- to C-terminus: Glucose-6-phosphate isomerase (558 aa).

Glu362 functions as the Proton donor in the catalytic mechanism. Residues His393 and Lys523 contribute to the active site.

It belongs to the GPI family.

It is found in the cytoplasm. The enzyme catalyses alpha-D-glucose 6-phosphate = beta-D-fructose 6-phosphate. Its pathway is carbohydrate degradation; glycolysis; D-glyceraldehyde 3-phosphate and glycerone phosphate from D-glucose: step 2/4. This is Glucose-6-phosphate isomerase (Pgi) from Drosophila yakuba (Fruit fly).